The sequence spans 282 residues: Sulfur carrier protein FdhD (282 aa).

C115 acts as the Cysteine persulfide intermediate in catalysis.

It belongs to the FdhD family.

The protein resides in the cytoplasm. Required for formate dehydrogenase (FDH) activity. Acts as a sulfur carrier protein that transfers sulfur from IscS to the molybdenum cofactor prior to its insertion into FDH. The polypeptide is Sulfur carrier protein FdhD (Streptomyces coelicolor (strain ATCC BAA-471 / A3(2) / M145)).